The primary structure comprises 132 residues: Small ribosomal subunit protein uS11 (132 aa).

A compositionally biased stretch (basic residues) spans 1–16 (MAAGMKGKRSRRRKER). The tract at residues 1 to 20 (MAAGMKGKRSRRRKERKNVE) is disordered.

The protein belongs to the universal ribosomal protein uS11 family. As to quaternary structure, part of the 30S ribosomal subunit. Interacts with proteins S7 and S18. Binds to IF-3.

Located on the platform of the 30S subunit, it bridges several disparate RNA helices of the 16S rRNA. Forms part of the Shine-Dalgarno cleft in the 70S ribosome. This chain is Small ribosomal subunit protein uS11, found in Clostridium botulinum (strain Hall / ATCC 3502 / NCTC 13319 / Type A).